We begin with the raw amino-acid sequence, 384 residues long: 1-deoxy-D-xylulose 5-phosphate reductoisomerase (384 aa).

Thr-11, Gly-12, Ser-13, Ile-14, Lys-38, and Asn-123 together coordinate NADPH. Lys-124 serves as a coordination point for 1-deoxy-D-xylulose 5-phosphate. Position 125 (Glu-125) interacts with NADPH. Asp-148 contributes to the Mn(2+) binding site. 1-deoxy-D-xylulose 5-phosphate is bound by residues Ser-149, Glu-150, Ser-174, and His-197. Glu-150 contributes to the Mn(2+) binding site. Gly-203 lines the NADPH pocket. 4 residues coordinate 1-deoxy-D-xylulose 5-phosphate: Ser-210, Asn-215, Lys-216, and Glu-219. Position 219 (Glu-219) interacts with Mn(2+).

Belongs to the DXR family. Mg(2+) is required as a cofactor. Mn(2+) serves as cofactor.

The catalysed reaction is 2-C-methyl-D-erythritol 4-phosphate + NADP(+) = 1-deoxy-D-xylulose 5-phosphate + NADPH + H(+). Its pathway is isoprenoid biosynthesis; isopentenyl diphosphate biosynthesis via DXP pathway; isopentenyl diphosphate from 1-deoxy-D-xylulose 5-phosphate: step 1/6. Catalyzes the NADPH-dependent rearrangement and reduction of 1-deoxy-D-xylulose-5-phosphate (DXP) to 2-C-methyl-D-erythritol 4-phosphate (MEP). The protein is 1-deoxy-D-xylulose 5-phosphate reductoisomerase of Halothermothrix orenii (strain H 168 / OCM 544 / DSM 9562).